We begin with the raw amino-acid sequence, 246 residues long: E3 ubiquitin-protein ligase RNF182 (246 aa).

The RING-type zinc finger occupies 22–70 (CKICYNRYNLRQRKPKVLGCCHRVCAKCLYKLVDCGESPQCVIVCPFCR). Transmembrane regions (helical) follow at residues 184-204 (VFVW…IYLL) and 211-231 (LGVV…IYGF).

Interacts with ATP6V0C.

Its subcellular location is the membrane. The protein localises to the cytoplasm. The catalysed reaction is S-ubiquitinyl-[E2 ubiquitin-conjugating enzyme]-L-cysteine + [acceptor protein]-L-lysine = [E2 ubiquitin-conjugating enzyme]-L-cysteine + N(6)-ubiquitinyl-[acceptor protein]-L-lysine.. It functions in the pathway protein modification; protein ubiquitination. E3 ubiquitin-protein ligase that mediates the ubiquitination of atp6v0c and targets it to degradation via the ubiquitin-proteasome pathway. This chain is E3 ubiquitin-protein ligase RNF182 (rnf182), found in Xenopus laevis (African clawed frog).